A 144-amino-acid polypeptide reads, in one-letter code: Small ribosomal subunit protein uS11c (144 aa).

The protein belongs to the universal ribosomal protein uS11 family. In terms of assembly, part of the 30S ribosomal subunit.

It is found in the plastid. It localises to the chloroplast. The protein is Small ribosomal subunit protein uS11c of Oenothera biennis (German evening primrose).